The chain runs to 540 residues: Beta-2-syntrophin (540 aa).

Residues 73-114 (LPNGGGAGDSLPGSPSRGLGPPSPPAPPRGPAGEAGASPPVR) are disordered. The span at 81-92 (DSLPGSPSRGLG) shows a compositional bias: low complexity. The segment covering 93 to 102 (PPSPPAPPRG) has biased composition (pro residues). 8 positions are modified to phosphoserine: serine 95, serine 110, serine 129, serine 211, serine 222, serine 233, serine 393, and serine 395. A compositionally biased stretch (low complexity) spans 103 to 112 (PAGEAGASPP). The PDZ domain maps to 115–198 (RVRVVKQEAG…EVLLEVKFIR (84 aa)). PH domains lie at 163-300 (ILSV…TNIM) and 325-437 (EVKH…QGCH). The tract at residues 220–240 (PQSPSFSGSEDSGSPKHQNST) is disordered. Positions 222-231 (SPSFSGSEDS) are enriched in low complexity. Positions 484–540 (PFERLKMSADDGIRNLYLDFGGPEGELTMDLHSCPKPIVFVLHTFLSAKVTRMGLLV) constitute an SU domain. The tract at residues 518–540 (PKPIVFVLHTFLSAKVTRMGLLV) is calmodulin-binding.

Belongs to the syntrophin family. Monomer and homodimer. Interacts with the other members of the syntrophin family: SNTA1 and SNTB1; and with the sodium channel proteins SCN4A and SCN5A. Interacts with SAST, MAST205, microtubules and microtubule-associated proteins. Interacts with the dystrophin protein DMD and related proteins DTNA and UTRN, and with the neuroregulin receptor ERBB4. Interacts with PTPRN when phosphorylated, protecting PTPRN from protein cleavage by CAPN1. Dephosphorylation upon insulin stimulation disrupts the interaction with PTPRN and results in the cleavage of PTPRN. Interacts with DTNB. Post-translationally, phosphorylated. Partially dephosphorylated upon insulin stimulation. In terms of tissue distribution, ubiquitous. Isoform 1 is the predominant isoform. Weak level of isoform 2 is present in all tested tissues, except in liver and heart where it is highly expressed.

It is found in the membrane. The protein resides in the cytoplasmic vesicle. The protein localises to the secretory vesicle membrane. Its subcellular location is the cell junction. It localises to the cytoplasm. It is found in the cytoskeleton. In terms of biological role, adapter protein that binds to and probably organizes the subcellular localization of a variety of membrane proteins. May link various receptors to the actin cytoskeleton and the dystrophin glycoprotein complex. May play a role in the regulation of secretory granules via its interaction with PTPRN. This is Beta-2-syntrophin (SNTB2) from Homo sapiens (Human).